Here is a 507-residue protein sequence, read N- to C-terminus: Histidine ammonia-lyase (507 aa).

The 5-imidazolinone (Ala-Gly) cross-link spans 141–143 (ASG). Ser-142 carries the 2,3-didehydroalanine (Ser) modification.

This sequence belongs to the PAL/histidase family. In terms of processing, contains an active site 4-methylidene-imidazol-5-one (MIO), which is formed autocatalytically by cyclization and dehydration of residues Ala-Ser-Gly.

It is found in the cytoplasm. It catalyses the reaction L-histidine = trans-urocanate + NH4(+). The protein operates within amino-acid degradation; L-histidine degradation into L-glutamate; N-formimidoyl-L-glutamate from L-histidine: step 1/3. This chain is Histidine ammonia-lyase, found in Natranaerobius thermophilus (strain ATCC BAA-1301 / DSM 18059 / JW/NM-WN-LF).